Reading from the N-terminus, the 232-residue chain is Phosphatidylserine decarboxylase proenzyme (232 aa).

Ser190 acts as the Schiff-base intermediate with substrate; via pyruvic acid in catalysis. Ser190 carries the post-translational modification Pyruvic acid (Ser); by autocatalysis.

It belongs to the phosphatidylserine decarboxylase family. PSD-A subfamily. In terms of assembly, heterodimer of a large membrane-associated beta subunit and a small pyruvoyl-containing alpha subunit. The cofactor is pyruvate. Post-translationally, is synthesized initially as an inactive proenzyme. Formation of the active enzyme involves a self-maturation process in which the active site pyruvoyl group is generated from an internal serine residue via an autocatalytic post-translational modification. Two non-identical subunits are generated from the proenzyme in this reaction, and the pyruvate is formed at the N-terminus of the alpha chain, which is derived from the carboxyl end of the proenzyme. The post-translation cleavage follows an unusual pathway, termed non-hydrolytic serinolysis, in which the side chain hydroxyl group of the serine supplies its oxygen atom to form the C-terminus of the beta chain, while the remainder of the serine residue undergoes an oxidative deamination to produce ammonia and the pyruvoyl prosthetic group on the alpha chain.

The protein resides in the cell membrane. The enzyme catalyses a 1,2-diacyl-sn-glycero-3-phospho-L-serine + H(+) = a 1,2-diacyl-sn-glycero-3-phosphoethanolamine + CO2. The protein operates within phospholipid metabolism; phosphatidylethanolamine biosynthesis; phosphatidylethanolamine from CDP-diacylglycerol: step 2/2. Its function is as follows. Catalyzes the formation of phosphatidylethanolamine (PtdEtn) from phosphatidylserine (PtdSer). The polypeptide is Phosphatidylserine decarboxylase proenzyme (Cereibacter sphaeroides (strain KD131 / KCTC 12085) (Rhodobacter sphaeroides)).